We begin with the raw amino-acid sequence, 881 residues long: Phosphoinositide 3-kinase regulatory subunit 5 (881 aa).

The interval 23–99 is heterodimerization; sequence SRDAVSSRWA…APHIPPDSEL (77 aa). Disordered regions lie at residues 312–339 and 472–499; these read PVAS…ERDS and PQAK…KLQT. The span at 316 to 330 shows a compositional bias: acidic residues; it reads ENEEDEEEEEEDVET. The tract at residues 657 to 757 is interaction with G beta gamma proteins; sequence PILADMILYY…WNDVEKVCTS (101 aa).

As to quaternary structure, heterodimer. Interacts with a catalytic subunit and with G beta gamma proteins.

Its subcellular location is the nucleus. The protein localises to the cytoplasm. It localises to the cell membrane. Greatly activated by G gamma proteins. Functionally, regulatory subunit of the PI3K gamma complex. This Gallus gallus (Chicken) protein is Phosphoinositide 3-kinase regulatory subunit 5 (PIK3R5).